The following is a 580-amino-acid chain: Micronemal protein 4 (580 aa).

Positions 1–25 (MRASLPVHLVVCTQLSAVWFGVAKA) are cleaved as a signal peptide. Apple domains lie at 68–137 (CVHS…SRSC), 141–214 (CFEQ…KQFC), 232–301 (CIQL…PKSC), 305–375 (CFSN…VTVG), 419–488 (CVHT…SRTC), and 492–565 (CLRR…YTFC). 15 cysteine pairs are disulfide-bonded: Cys68–Cys137, Cys93–Cys115, Cys97–Cys103, Cys141–Cys214, Cys166–Cys188, Cys170–Cys176, Cys232–Cys301, Cys257–Cys279, Cys261–Cys267, Cys305–Cys380, Cys332–Cys354, Cys336–Cys342, Cys419–Cys488, Cys444–Cys466, and Cys448–Cys454.

As to quaternary structure, monomer. Part of the MIC6-MIC1-MIC4 complex. Interacts (via the second apple domain) directly with MIC1 (via the beta-finger region). Interacts with murine TLR2; the interaction promotes activation of bone marrow-derived dendritic cells and macrophages in the host. Interacts with murine TLR4; the interaction promotes activation of bone marrow-derived dendritic cells and macrophages in the host. Proteolytically cleaved at the N- and C-terminus after release from the microneme.

The protein resides in the cytoplasmic vesicle. The protein localises to the secretory vesicle. It is found in the microneme. It localises to the host early endosome. Lacto-N-biose inhibits binding to asialofetuin, a host glycoprotein. Its function is as follows. Soluble adhesin with carbohydrate-binding activity. Binds to galactose-terminating oligosaccharides. Required for attachment of the parasite to the host cell prior to invasion. Triggers the activation of murine bone marrow-derived dendritic cells and macrophages and production of pro-inflammatory cytokines, such as IL12 (IL12B/IL12A), in host TLR2/TLR4-dependent manner. Triggers the production of anti-inflammatory cytokine IL10 in murine bone marrow-derived macrophages in host TLR4-dependent manner. Induces transient endotoxin tolerance in murine bone marrow-derived macrophages, manifested by reduced TNF-alpha (TNF) production in response to challenge with lipopolysaccharides (LPS). This chain is Micronemal protein 4, found in Toxoplasma gondii.